The chain runs to 314 residues: Porphobilinogen deaminase (314 aa).

At Cys241 the chain carries S-(dipyrrolylmethanemethyl)cysteine.

Belongs to the HMBS family. As to quaternary structure, monomer. The cofactor is dipyrromethane.

The enzyme catalyses 4 porphobilinogen + H2O = hydroxymethylbilane + 4 NH4(+). The protein operates within porphyrin-containing compound metabolism; protoporphyrin-IX biosynthesis; coproporphyrinogen-III from 5-aminolevulinate: step 2/4. It functions in the pathway porphyrin-containing compound metabolism; chlorophyll biosynthesis. In terms of biological role, tetrapolymerization of the monopyrrole PBG into the hydroxymethylbilane pre-uroporphyrinogen in several discrete steps. The polypeptide is Porphobilinogen deaminase (Chloroherpeton thalassium (strain ATCC 35110 / GB-78)).